Reading from the N-terminus, the 370-residue chain is tRNA-specific 2-thiouridylase MnmA (370 aa).

ATP-binding positions include 19–26 (AMSGGVDS) and leucine 45. Cysteine 113 (nucleophile) is an active-site residue. A disulfide bridge connects residues cysteine 113 and cysteine 209. Glycine 137 provides a ligand contact to ATP. An interaction with tRNA region spans residues 159-161 (KDQ). Cysteine 209 (cysteine persulfide intermediate) is an active-site residue.

This sequence belongs to the MnmA/TRMU family.

Its subcellular location is the cytoplasm. The enzyme catalyses S-sulfanyl-L-cysteinyl-[protein] + uridine(34) in tRNA + AH2 + ATP = 2-thiouridine(34) in tRNA + L-cysteinyl-[protein] + A + AMP + diphosphate + H(+). Functionally, catalyzes the 2-thiolation of uridine at the wobble position (U34) of tRNA, leading to the formation of s(2)U34. This is tRNA-specific 2-thiouridylase MnmA from Rickettsia conorii (strain ATCC VR-613 / Malish 7).